The sequence spans 125 residues: uncharacterized protein (125 aa).

Residues 19–73 enclose the HTH cro/C1-type domain; that stretch reads IYSLRLAKGLSRQQLAEVIDVTHQQLQKYEKAINRISVGRLVLIAEALDRNIDYF. Residues 30–49 constitute a DNA-binding region (H-T-H motif); the sequence is RQQLAEVIDVTHQQLQKYEK.

This is an uncharacterized protein from Rickettsia conorii (strain ATCC VR-613 / Malish 7).